Here is a 282-residue protein sequence, read N- to C-terminus: Ribosome biogenesis GTPase A (282 aa).

The region spanning 14-178 (RREVTEKLKL…LLDTPGILWP (165 aa)) is the CP-type G domain. Residues 58–61 (NKAD), 86–87 (NS), 130–135 (NVGKST), and Gly-174 contribute to the GTP site.

This sequence belongs to the TRAFAC class YlqF/YawG GTPase family. MTG1 subfamily. In terms of assembly, interacts with ctc. Interacts with the immature 50S ribosome subunit. 2 molecules of RbgA bind to one 50S subunit.

The protein localises to the cytoplasm. In terms of biological role, essential protein that is required for a late step of 50S ribosomal subunit assembly. Has GTPase activity that is stimulated by interaction with the immature 50S ribosome subunit. Binds to the 23S rRNA. Required for the association of ribosomal proteins RplP and RpmA with the large subunit. The sequence is that of Ribosome biogenesis GTPase A (rbgA) from Bacillus subtilis (strain 168).